The primary structure comprises 403 residues: NADH-quinone oxidoreductase subunit D (403 aa).

This sequence belongs to the complex I 49 kDa subunit family. As to quaternary structure, NDH-1 is composed of 14 different subunits. Subunits NuoB, C, D, E, F, and G constitute the peripheral sector of the complex.

It is found in the cell inner membrane. The catalysed reaction is a quinone + NADH + 5 H(+)(in) = a quinol + NAD(+) + 4 H(+)(out). Its function is as follows. NDH-1 shuttles electrons from NADH, via FMN and iron-sulfur (Fe-S) centers, to quinones in the respiratory chain. The immediate electron acceptor for the enzyme in this species is believed to be ubiquinone. Couples the redox reaction to proton translocation (for every two electrons transferred, four hydrogen ions are translocated across the cytoplasmic membrane), and thus conserves the redox energy in a proton gradient. This is NADH-quinone oxidoreductase subunit D from Pelobacter propionicus (strain DSM 2379 / NBRC 103807 / OttBd1).